The following is a 159-amino-acid chain: Ribosome maturation factor RimP (159 aa).

The protein belongs to the RimP family.

It is found in the cytoplasm. Required for maturation of 30S ribosomal subunits. This is Ribosome maturation factor RimP from Streptococcus pneumoniae (strain 70585).